Reading from the N-terminus, the 273-residue chain is Acetyl-coenzyme A carboxylase carboxyl transferase subunit alpha (273 aa).

A CoA carboxyltransferase C-terminal domain is found at 1 to 244 (MKKATQSKAW…KVVLKQALDE (244 aa)).

Belongs to the AccA family. As to quaternary structure, acetyl-CoA carboxylase is a heterohexamer composed of biotin carboxyl carrier protein (AccB), biotin carboxylase (AccC) and two subunits each of ACCase subunit alpha (AccA) and ACCase subunit beta (AccD).

The protein localises to the cytoplasm. The catalysed reaction is N(6)-carboxybiotinyl-L-lysyl-[protein] + acetyl-CoA = N(6)-biotinyl-L-lysyl-[protein] + malonyl-CoA. The protein operates within lipid metabolism; malonyl-CoA biosynthesis; malonyl-CoA from acetyl-CoA: step 1/1. Its function is as follows. Component of the acetyl coenzyme A carboxylase (ACC) complex. First, biotin carboxylase catalyzes the carboxylation of biotin on its carrier protein (BCCP) and then the CO(2) group is transferred by the carboxyltransferase to acetyl-CoA to form malonyl-CoA. This chain is Acetyl-coenzyme A carboxylase carboxyl transferase subunit alpha, found in Acinetobacter baumannii (strain AB0057).